We begin with the raw amino-acid sequence, 528 residues long: MATRVEEAARGRGGGAEEATEAGRGGRRRSPRQKFEIGTMEEAGICGLGVKADMLCNSQSNDILQHQGSNCGGTSNKHSLEEDEGSDFITENRNLVSPAYCTQESREEIPGGEARTDPPDGQQDSECNRNKEKTLGKEVLLLMQALNTLSTPEEKLAALCKKYADLLEESRSVQKQMKILQKKQAQIVKEKVHLQSEHSKAILARSKLESLCRELQRHNKTLKEENMQQAREEEERRKEATAHFQITLNEIQAQLEQHDIHNAKLRQENIELGEKLKKLIEQYALREEHIDKVFKHKELQQQLVDAKLQQTTQLIKEADEKHQREREFLLKEATESRHKYEQMKQQEVQLKQQLSLYMDKFEEFQTTMAKSNELFTTFRQEMEKMTKKIKKLEKETIIWRTKWENNNKALLQMAEEKTVRDKEYKALQIKLERLEKLCRALQTERNELNEKVEVLKEQVSIKAAIKAANRDLATPVMQPCTALDSHKELNTSSKRALGAHLEAEPKSQRSAVQKPPSTGSAPAIESVD.

Residues 1 to 10 (MATRVEEAAR) are compositionally biased toward basic and acidic residues. A disordered region spans residues 1 to 36 (MATRVEEAARGRGGGAEEATEAGRGGRRRSPRQKFE). An omega-N-methylarginine mark is found at R12 and R24. S79, S86, S97, and S105 each carry phosphoserine. The interval 102 to 130 (TQESREEIPGGEARTDPPDGQQDSECNRN) is disordered. Over residues 104–118 (ESREEIPGGEARTDP) the composition is skewed to basic and acidic residues. The stretch at 153 to 464 (EEKLAALCKK…LKEQVSIKAA (312 aa)) forms a coiled coil. The residue at position 283 (Y283) is a Phosphotyrosine. The segment at 486 to 528 (HKELNTSSKRALGAHLEAEPKSQRSAVQKPPSTGSAPAIESVD) is disordered. Over residues 508 to 520 (QRSAVQKPPSTGS) the composition is skewed to polar residues. Residue S517 is modified to Phosphoserine.

Belongs to the taxilin family. As to quaternary structure, binds to the C-terminal coiled coil region of syntaxin family members STX1A, STX3A and STX4A. Forms a heterodimer with ATF4 in osteoblasts. As to expression, ubiquitously expressed. Expressed at high level in heart and skeletal muscle. Expressed in brain, placenta, lung, liver, kidney and pancreas.

It is found in the nucleus membrane. It localises to the cytoplasm. Its subcellular location is the cytosol. In terms of biological role, may be involved in intracellular vesicle traffic. Inhibits ATF4-mediated transcription, possibly by dimerizing with ATF4 to form inactive dimers that cannot bind DNA. May be involved in regulating bone mass density through an ATF4-dependent pathway. May be involved in cell cycle progression. In Homo sapiens (Human), this protein is Gamma-taxilin (TXLNG).